The following is a 312-amino-acid chain: F-box protein At1g11270 (312 aa).

The F-box domain occupies 29–80 (SVVKLLLPHDVVGLILERLPVESLLRFKCVSNQWKSTIESQCFQERQLIRRM).

The polypeptide is F-box protein At1g11270 (Arabidopsis thaliana (Mouse-ear cress)).